The sequence spans 366 residues: GTP cyclohydrolase 1 type 2 homolog (366 aa).

His64, His65, Asp102, His326, and Glu329 together coordinate Zn(2+).

This sequence belongs to the GTP cyclohydrolase I type 2/NIF3 family. In terms of assembly, homohexamer.

The sequence is that of GTP cyclohydrolase 1 type 2 homolog from Staphylococcus aureus (strain MSSA476).